The primary structure comprises 228 residues: Glyceraldehyde 3-phosphate phosphatase (228 aa).

Belongs to the HAD-like hydrolase superfamily. Mg(2+) serves as cofactor.

Functionally, catalyzes the dephosphorylation of D,L-glyceraldehyde 3-phosphate in vitro. The protein is Glyceraldehyde 3-phosphate phosphatase of Methanocaldococcus jannaschii (strain ATCC 43067 / DSM 2661 / JAL-1 / JCM 10045 / NBRC 100440) (Methanococcus jannaschii).